The chain runs to 176 residues: Inner membrane-spanning protein YciB (176 aa).

Helical transmembrane passes span 24 to 44 (TATAVAIGATLVQIAWVAFRH), 49 to 69 (PMLWVSLGVVTVFGGATLVLH), 76 to 96 (WKPTVLYWAFSVVLVVSALGF), 121 to 141 (YVWAVFFVLLGILNLFVAYNF), and 149 to 169 (FKLFGATGCLVVFIVGQSLWL).

Belongs to the YciB family.

It is found in the cell inner membrane. Its function is as follows. Plays a role in cell envelope biogenesis, maintenance of cell envelope integrity and membrane homeostasis. This Paraburkholderia phymatum (strain DSM 17167 / CIP 108236 / LMG 21445 / STM815) (Burkholderia phymatum) protein is Inner membrane-spanning protein YciB.